The chain runs to 265 residues: Novel plant SNARE 11 (265 aa).

The Cytoplasmic segment spans residues 1–215 (MDPISAVSEE…IGRQVATDKC (215 aa)). Residues 30-75 (QKLEKIKDANRQSRQLEELTDKMRDCKSLIKDFDREIKSLESGNDA) adopt a coiled-coil conformation. The region spanning 144–206 (NSMMDDTDQA…KKASKLVKEI (63 aa)) is the t-SNARE coiled-coil homology domain. The chain crosses the membrane as a helical; Anchor for type IV membrane protein span at residues 216 to 236 (IMAFLFLIVIGVIAIIIVKIV). Residues 237 to 265 (NPNNKDIRDIPGVGLAPPAMNRRLLWNHY) are Vesicular-facing.

The protein belongs to the novel plant SNARE family. Interacts with KNOLLE to form a t-SNARE complex. Does not interact with SYP21, VTI12 or VPS45. In terms of tissue distribution, expressed in roots, stems, flower, siliques, expanding leaves, but not in mature leaves. Not limited to dividing cells.

Its subcellular location is the membrane. Its function is as follows. t-SNARE involved in diverse vesicle trafficking and membrane fusion processes, including cell plate formation. In Arabidopsis thaliana (Mouse-ear cress), this protein is Novel plant SNARE 11 (NPSN11).